The sequence spans 250 residues: Proteasome subunit alpha type-4-A (250 aa).

Glycyl lysine isopeptide (Lys-Gly) (interchain with G-Cter in ubiquitin) cross-links involve residues K40 and K64.

This sequence belongs to the peptidase T1A family. Component of the 20S core complex of the 26S proteasome. The 26S proteasome is composed of a core protease (CP), known as the 20S proteasome, capped at one or both ends by the 19S regulatory particle (RP/PA700). The 20S proteasome core is composed of 28 subunits that are arranged in four stacked rings, resulting in a barrel-shaped structure. The two end rings are each formed by seven alpha subunits, and the two central rings are each formed by seven beta subunits. The catalytic chamber with the active sites is on the inside of the barrel. Ubiquitous low levels, higher expression in siliques and flowers.

The protein localises to the cytoplasm. The protein resides in the nucleus. Its function is as follows. The proteasome is a multicatalytic proteinase complex which is characterized by its ability to cleave peptides with Arg, Phe, Tyr, Leu, and Glu adjacent to the leaving group at neutral or slightly basic pH. The proteasome has an ATP-dependent proteolytic activity. In Arabidopsis thaliana (Mouse-ear cress), this protein is Proteasome subunit alpha type-4-A (PAC1).